We begin with the raw amino-acid sequence, 619 residues long: Polyadenylate-binding protein 1-like (619 aa).

4 consecutive RRM domains span residues alanine 11–arginine 89, glycine 99–serine 175, threonine 191–lysine 268, and valine 294–arginine 370. A disordered region spans residues proline 431 to valine 458. The 78-residue stretch at glutamine 533–alanine 610 folds into the PABC domain.

The protein belongs to the polyadenylate-binding protein type-1 family. Expressed in ovary and testis. Also expressed in pancreas, liver and thymus, and at lower levels in other somatic tissues including brain and lung.

The protein resides in the cytoplasm. Its function is as follows. Poly(A)-binding protein involved in oocyte maturation and early embryo development. It is required for cytosolic mRNA polyadenylation and translational activation of maternally stored mRNA in oocytes. This Homo sapiens (Human) protein is Polyadenylate-binding protein 1-like.